Consider the following 229-residue polypeptide: Ribose-5-phosphate isomerase A (229 aa).

Residues 28–31 (TGST), 85–88 (DGAD), and 98–101 (KGRG) contribute to the substrate site. Glu-107 acts as the Proton acceptor in catalysis. A substrate-binding site is contributed by Lys-125.

It belongs to the ribose 5-phosphate isomerase family. Homotetramer.

It catalyses the reaction aldehydo-D-ribose 5-phosphate = D-ribulose 5-phosphate. The protein operates within carbohydrate degradation; pentose phosphate pathway; D-ribose 5-phosphate from D-ribulose 5-phosphate (non-oxidative stage): step 1/1. Its activity is regulated as follows. Inhibited by D-4-phosphoerythronic acid. Its function is as follows. Involved in the first step of the non-oxidative branch of the pentose phosphate pathway. It catalyzes the reversible conversion of ribose-5-phosphate to ribulose 5-phosphate. In Pyrococcus horikoshii (strain ATCC 700860 / DSM 12428 / JCM 9974 / NBRC 100139 / OT-3), this protein is Ribose-5-phosphate isomerase A.